Consider the following 187-residue polypeptide: MPLPENLIAITMHVLHGSCTGLIIKHIKYFTKILRLINRPTIPYKEEHYAIRVILGLNVFIHPYLAQDVNGLNAKPLTHPMCKPNSTSDIRDAHDLTYMDHIVSRLERLDLTWAFTALRNIWASIHPIPPGLPIDGSVCPGLSFCDADSRDSRTAAVWAVEVQTATNLRAWSRNYDICWSLRHNSSP.

This is an uncharacterized protein from Manihot esculenta (Cassava).